Here is a 56-residue protein sequence, read N- to C-terminus: Cytochrome b-c1 complex subunit 10 (56 aa).

Topologically, residues 1-12 are mitochondrial matrix; it reads MLTRFLGPRYRQ. Residues 13 to 35 form a helical membrane-spanning segment; it reads LARNWVPTASLWGAVGAVGLVWA. Residues 36–56 lie on the Mitochondrial intermembrane side of the membrane; that stretch reads TDWRLILDWVPYINGKFKKDD.

It belongs to the UQCR11/QCR10 family. Component of the ubiquinol-cytochrome c oxidoreductase (cytochrome b-c1 complex, complex III, CIII), a multisubunit enzyme composed of 11 subunits. The complex is composed of 3 respiratory subunits cytochrome b, cytochrome c1 and Rieske protein UQCRFS1, 2 core protein subunits UQCRC1/QCR1 and UQCRC2/QCR2, and 6 low-molecular weight protein subunits UQCRH/QCR6, UQCRB/QCR7, UQCRQ/QCR8, UQCR10/QCR9, UQCR11/QCR10 and subunit 9, the cleavage product of Rieske protein UQCRFS1. The complex exists as an obligatory dimer and forms supercomplexes (SCs) in the inner mitochondrial membrane with NADH-ubiquinone oxidoreductase (complex I, CI) and cytochrome c oxidase (complex IV, CIV), resulting in different assemblies (supercomplex SCI(1)III(2)IV(1) and megacomplex MCI(2)III(2)IV(2)).

The protein localises to the mitochondrion inner membrane. Component of the ubiquinol-cytochrome c oxidoreductase, a multisubunit transmembrane complex that is part of the mitochondrial electron transport chain which drives oxidative phosphorylation. The respiratory chain contains 3 multisubunit complexes succinate dehydrogenase (complex II, CII), ubiquinol-cytochrome c oxidoreductase (cytochrome b-c1 complex, complex III, CIII) and cytochrome c oxidase (complex IV, CIV), that cooperate to transfer electrons derived from NADH and succinate to molecular oxygen, creating an electrochemical gradient over the inner membrane that drives transmembrane transport and the ATP synthase. The cytochrome b-c1 complex catalyzes electron transfer from ubiquinol to cytochrome c, linking this redox reaction to translocation of protons across the mitochondrial inner membrane, with protons being carried across the membrane as hydrogens on the quinol. In the process called Q cycle, 2 protons are consumed from the matrix, 4 protons are released into the intermembrane space and 2 electrons are passed to cytochrome c. QCR10 has a role in CIII assembly and RIP1 stability. In Bos taurus (Bovine), this protein is Cytochrome b-c1 complex subunit 10 (UQCR11).